The chain runs to 459 residues: Zinc finger transcription factor lin-29 (459 aa).

Over residues 1–14 the composition is skewed to polar residues; the sequence is MDQTVLDSAFNSPV. Residues 1–73 are disordered; sequence MDQTVLDSAF…GSTGSTPAHH (73 aa). A compositionally biased stretch (low complexity) spans 16–56; it reads SGIAGTTTGSGSTTHFGVGTNFKVSVRSSSRSTDGTDSTDG. The segment covering 57 to 73 has biased composition (polar residues); the sequence is ANSDNVTGSTGSTPAHH. 5 C2H2-type zinc fingers span residues 151–173, 180–202, 208–232, 238–260, and 269–291; these read YKCT…MRIH, GPCN…IRTH, YKCK…SRCH, FKCN…IPKH, and HICP…MTKH. An interacts with mab-10 region spans residues 390–406; sequence PGFNMITPLENIQRYNG. The span at 423–444 shows a compositional bias: low complexity; that stretch reads VSSTPSSTSSSSAGSSSSQGGV. The interval 423 to 459 is disordered; it reads VSSTPSSTSSSSAGSSSSQGGVFNPQSLINNMKNHSY. Positions 446 to 459 are enriched in polar residues; the sequence is NPQSLINNMKNHSY.

Interacts (via C-terminus) with transcription cofactor mab-10. As to expression, expressed in lateral hypodermal seam cells (at protein level).

The protein resides in the nucleus. Its function is as follows. Transcription factor which regulates the expression of various genes, including those involved in cuticle synthesis and maintenance, such as collagens, and in lipid metabolism. Binds to promoter regions of genes, at 5'-[(T/G)TTTTTT(A/T/C/G)]-3' consensus sequences. Heterochronic protein which controls the choice of stage specific cell fates, including at the juvenile to adult transition. Promotes differentiation, together with transcriptional cofactor mab-10, perhaps as part of a transcriptional complex. Required for vulval morphogenesis and egg laying; perhaps by acting in a subset of the lateral seam cells. Involved in the exit of seam cells from the cell cycle. Required for specification of uterine pi-cell fate, acting upstream of lin-12 Notch signaling, perhaps via maintenance of lag-2 expression in the anchor cell (AC). Involved in morphogenesis of the specialized male tail used in mating. Acts cell non-autonomously from the hypodermis to regulate expression of genes in the intestine, including genes involved in lipid metabolism. May regulate vitellogenesis via the mTORC2 signaling mediated pathway, independently of daf-16. May promote nuclear accumulation of mab-10 in seam cells post-transcriptionally. Dispensable for seam cell fusion. Functionally, required for seam cell fusion. This chain is Zinc finger transcription factor lin-29, found in Caenorhabditis elegans.